The primary structure comprises 968 residues: RNA polymerase-associated protein RapA (968 aa).

The Helicase ATP-binding domain maps to 164–334; the sequence is EVGQRHAPRV…FARLRLLDPN (171 aa). 177-184 is a binding site for ATP; it reads DEVGLGKT. The short motif at 280–283 is the DEAH box element; it reads DEAH. Residues 493 to 644 form the Helicase C-terminal domain; sequence WLVDFLLDLR…TCPTGRALYD (152 aa).

This sequence belongs to the SNF2/RAD54 helicase family. RapA subfamily. As to quaternary structure, interacts with the RNAP. Has a higher affinity for the core RNAP than for the holoenzyme. Its ATPase activity is stimulated by binding to RNAP.

Transcription regulator that activates transcription by stimulating RNA polymerase (RNAP) recycling in case of stress conditions such as supercoiled DNA or high salt concentrations. Probably acts by releasing the RNAP, when it is trapped or immobilized on tightly supercoiled DNA. Does not activate transcription on linear DNA. Probably not involved in DNA repair. This chain is RNA polymerase-associated protein RapA, found in Sodalis glossinidius (strain morsitans).